We begin with the raw amino-acid sequence, 204 residues long: N-(5'-phosphoribosyl)anthranilate isomerase (204 aa).

This sequence belongs to the TrpF family.

It catalyses the reaction N-(5-phospho-beta-D-ribosyl)anthranilate = 1-(2-carboxyphenylamino)-1-deoxy-D-ribulose 5-phosphate. It functions in the pathway amino-acid biosynthesis; L-tryptophan biosynthesis; L-tryptophan from chorismate: step 3/5. The chain is N-(5'-phosphoribosyl)anthranilate isomerase from Bacillus cereus (strain B4264).